Consider the following 53-residue polypeptide: Mannose/glucose-specific lectin alpha 2 chain (53 aa).

The protein belongs to the leguminous lectin family. As to quaternary structure, tetramer of two alpha and two beta chains.

The polypeptide is Mannose/glucose-specific lectin alpha 2 chain (Lathyrus ochrus (Cyprus-vetch)).